Here is a 591-residue protein sequence, read N- to C-terminus: Fidgetin-like protein 1 (591 aa).

Disordered stretches follow at residues 1-117 (MYSP…KSSL) and 223-249 (GQEP…SQPI). Basic and acidic residues predominate over residues 17–26 (KRPETEENRG). The segment covering 76 to 93 (DDDPESIVIDEDDEEDEP) has biased composition (acidic residues). The span at 237 to 249 (RQSSSQSNHSQPI) shows a compositional bias: polar residues. ATP-binding positions include alanine 319 and 359–364 (GTGKTM).

This sequence belongs to the AAA ATPase family. As to quaternary structure, hexamer. Mg(2+) serves as cofactor.

It is found in the nucleus. It catalyses the reaction ATP + H2O = ADP + phosphate + H(+). Has a role in spindle assembly which acts in the progression through mitosis during embryogenesis. Required for fertility. This chain is Fidgetin-like protein 1 (figl-1), found in Caenorhabditis briggsae.